The sequence spans 234 residues: Protein UL20 homolog (234 aa).

The next 4 helical transmembrane spans lie at 82–102, 112–132, 153–173, and 191–211; these read VVLFGLSTFVLRPSCCLIFLF, FLILGTTITAFFYGTLMLEMY, IGALSMLGPIIFVAISYNMIF, and TSGFVIYLVMIASLAYSITSI.

It belongs to the alphaherpesvirinae UL20 family. As to quaternary structure, interacts with gK (via N-terminus); this interaction plays a role in the coordinate transport of UL20 and gK to the trans-Golgi network (TGN), and is required for their cell surface expression. Interacts with gB.

It localises to the virion. It is found in the host cell membrane. The protein resides in the host endosome membrane. Its subcellular location is the host Golgi apparatus membrane. The protein localises to the host nucleus membrane. Plays an essential role in egress of virus particles from the nucleus, cytoplasmic envelopment and virus-induced cell fusion. Forms a functional protein complex with gK and this interaction is absolutely essential for their coordinate intracellular transport, gK glycosylation, expression on host cell surface, and function. Together, they modulate gB-mediated virus-induced cell fusion and virion egress and therefore actively participate in these processes. This Gallid herpesvirus 2 (strain Chicken/Md5/ATCC VR-987) (GaHV-2) protein is Protein UL20 homolog (MDV032).